A 1755-amino-acid chain; its full sequence is BCL-6 corepressor (1755 aa).

A disordered region spans residues 309–345 (NSKQPRVPSAKAVTSGLPGDTALLLPPSPRPSPRVHL). Residues Ser-336, Ser-340, Ser-365, and Ser-367 each carry the phosphoserine modification. The interval 388 to 438 (LSNGKYPKAPEGGEGAQPVPGHARKTAVQDRKDGSSPPLLEKQTVTKDVTD) is disordered. Lys-392 carries the post-translational modification N6-acetyllysine. At Ser-423 the chain carries Phosphoserine. Positions 498–514 (RSEIISTAPSSWVVPGP) are interaction with BCL6. Low complexity predominate over residues 557–578 (VSGSVSSAGRPASASPAPNANA). Disordered regions lie at residues 557 to 641 (VSGS…IFLS), 737 to 760 (ITKE…DPTL), 773 to 794 (TKLH…WNQG), and 815 to 844 (AKTD…SVEP). Positions 580–594 (GTKTSRSSVETTPSV) are enriched in polar residues. Low complexity predominate over residues 605–620 (PAKHSSSTSSKGAKAS). Positions 775–785 (LHPDVPTDKNL) are enriched in basic and acidic residues. A Glycyl lysine isopeptide (Lys-Gly) (interchain with G-Cter in SUMO2) cross-link involves residue Lys-786. Lys-872 participates in a covalent cross-link: Glycyl lysine isopeptide (Lys-Gly) (interchain with G-Cter in SUMO2). Disordered stretches follow at residues 1071 to 1187 (IAEQ…EDPH) and 1220 to 1328 (QQVS…KENQ). Over residues 1076-1107 (ESERCEYSVGNKHRDPFEAPEDKDLPVEKYFV) the composition is skewed to basic and acidic residues. Phosphoserine is present on residues Ser-1127 and Ser-1139. Positions 1166 to 1175 (SKDDWPEREM) are enriched in basic and acidic residues. A compositionally biased stretch (polar residues) spans 1238 to 1252 (TQATQPEAIPQGTNI). Residues 1253–1279 (TEEKPGRKRAEAKGNRSWSEESLKPSD) show a composition bias toward basic and acidic residues. Residue Lys-1256 forms a Glycyl lysine isopeptide (Lys-Gly) (interchain with G-Cter in SUMO2) linkage. Phosphoserine occurs at positions 1290, 1345, and 1410. Lys-1413 is covalently cross-linked (Glycyl lysine isopeptide (Lys-Gly) (interchain with G-Cter in SUMO2)). Polar residues predominate over residues 1430 to 1447 (QSTQLPCSSSPQETTQSR). The segment at 1430-1451 (QSTQLPCSSSPQETTQSRPMPP) is disordered. ANK repeat units lie at residues 1462 to 1495 (AGET…HRDN), 1496 to 1525 (AGYC…DVNC), and 1529 to 1558 (DGTR…DPTL). The necessary and sufficient for interaction with PCGF1 stretch occupies residues 1634–1748 (SDVFEFEFSE…SSVEWLHPSD (115 aa)).

The protein belongs to the BCOR family. As to quaternary structure, interacts with BCL6; the interaction is direct. Forms ternary complexes with BCL6 and SMRT/NCOR2 on selected target genes promoters; potently repress expression. Can interact with HDAC1, HDAC3 and HDAC5. Interacts with PCGF1; the interaction is direct. Interacts with KDM2B. Component of an approximately 800 kDa repressive BCOR complex at least composed of BCOR, RYBP, PCGF1, RING1, RNF2/RING2, KDM2B and SKP1. Interacts with CPNE4 (via VWFA domain). Isoform 1 may interact with MLLT3/AF9. As to expression, ubiquitously expressed.

The protein localises to the nucleus. Transcriptional corepressor. May specifically inhibit gene expression when recruited to promoter regions by sequence-specific DNA-binding proteins such as BCL6 and MLLT3. This repression may be mediated at least in part by histone deacetylase activities which can associate with this corepressor. Involved in the repression of TFAP2A; impairs binding of BCL6 and KDM2B to TFAP2A promoter regions. Via repression of TFAP2A acts as a negative regulator of osteo-dentiogenic capacity in adult stem cells; the function implies inhibition of methylation on histone H3 'Lys-4' (H3K4me3) and 'Lys-36' (H3K36me2). The chain is BCL-6 corepressor (BCOR) from Homo sapiens (Human).